The primary structure comprises 237 residues: Pyridoxal 5'-phosphate synthase subunit PdxS (237 aa).

The active-site Schiff-base intermediate with D-ribose 5-phosphate is the Lys19. Residue Gly91 coordinates D-ribose 5-phosphate. D-glyceraldehyde 3-phosphate is bound at residue Arg103. Residues Gly157 and 178–179 each bind D-ribose 5-phosphate; that span reads GS.

Belongs to the PdxS/SNZ family. In the presence of PdxT, forms a dodecamer of heterodimers.

It carries out the reaction aldehydo-D-ribose 5-phosphate + D-glyceraldehyde 3-phosphate + L-glutamine = pyridoxal 5'-phosphate + L-glutamate + phosphate + 3 H2O + H(+). Its pathway is cofactor biosynthesis; pyridoxal 5'-phosphate biosynthesis. Its function is as follows. Catalyzes the formation of pyridoxal 5'-phosphate from ribose 5-phosphate (RBP), glyceraldehyde 3-phosphate (G3P) and ammonia. The ammonia is provided by the PdxT subunit. Can also use ribulose 5-phosphate and dihydroxyacetone phosphate as substrates, resulting from enzyme-catalyzed isomerization of RBP and G3P, respectively. This chain is Pyridoxal 5'-phosphate synthase subunit PdxS, found in Methanococcus vannielii.